Reading from the N-terminus, the 937-residue chain is Periplasmic nitrate reductase (937 aa).

Positions 1-31 (MSMNRREFLKTTAAAAAASAVGISIPSEAKA) form a signal peptide, tat-type signal. The 4Fe-4S Mo/W bis-MGD-type domain maps to 40 to 96 (WQWDKAVCRFCGTGCGIMVAVKDDKIVAVKGDPESPVNRGINCIKGYFNAKIMYGAD). Positions 47, 50, 54, and 82 each coordinate [4Fe-4S] cluster. Mo-bis(molybdopterin guanine dinucleotide) is bound by residues K84, Q152, N177, C181, 214–221 (WGANMAEM), M422, Q426, N532, K580, D607, and 827–836 (TGRVLEHWHS). A substrate-binding site is contributed by W903. Mo-bis(molybdopterin guanine dinucleotide) contacts are provided by N911 and K928.

Belongs to the prokaryotic molybdopterin-containing oxidoreductase family. NasA/NapA/NarB subfamily. Component of the periplasmic nitrate reductase NapAB complex composed of NapA and NapB. Requires [4Fe-4S] cluster as cofactor. Mo-bis(molybdopterin guanine dinucleotide) serves as cofactor. Predicted to be exported by the Tat system. The position of the signal peptide cleavage has not been experimentally proven.

The protein localises to the periplasm. The enzyme catalyses 2 Fe(II)-[cytochrome] + nitrate + 2 H(+) = 2 Fe(III)-[cytochrome] + nitrite + H2O. Catalytic subunit of the periplasmic nitrate reductase complex NapAB. Receives electrons from NapB and catalyzes the reduction of nitrate to nitrite. The sequence is that of Periplasmic nitrate reductase from Nautilia profundicola (strain ATCC BAA-1463 / DSM 18972 / AmH).